The chain runs to 100 residues: Protein translation factor SUI1 homolog (100 aa).

This sequence belongs to the SUI1 family.

This chain is Protein translation factor SUI1 homolog, found in Sulfurisphaera tokodaii (strain DSM 16993 / JCM 10545 / NBRC 100140 / 7) (Sulfolobus tokodaii).